Consider the following 96-residue polypeptide: Putative pterin-4-alpha-carbinolamine dehydratase (96 aa).

The protein belongs to the pterin-4-alpha-carbinolamine dehydratase family.

The catalysed reaction is (4aS,6R)-4a-hydroxy-L-erythro-5,6,7,8-tetrahydrobiopterin = (6R)-L-erythro-6,7-dihydrobiopterin + H2O. The chain is Putative pterin-4-alpha-carbinolamine dehydratase from Herpetosiphon aurantiacus (strain ATCC 23779 / DSM 785 / 114-95).